We begin with the raw amino-acid sequence, 82 residues long: Small ribosomal subunit protein eS21 (82 aa).

This sequence belongs to the eukaryotic ribosomal protein eS21 family.

In Oryza sativa subsp. japonica (Rice), this protein is Small ribosomal subunit protein eS21 (RPS21).